A 112-amino-acid polypeptide reads, in one-letter code: UPF0375 protein R05A10.4 (112 aa).

The first 19 residues, 1 to 19 (MNLSIFSAIIFSITIASSA), serve as a signal peptide directing secretion. Residue N59 is glycosylated (N-linked (GlcNAc...) asparagine).

This sequence belongs to the UPF0375 family.

Its subcellular location is the secreted. This is UPF0375 protein R05A10.4 from Caenorhabditis elegans.